The following is a 162-amino-acid chain: Ribosome maturation factor RimM (162 aa).

The region spanning 86–160 (EGRYYYFALI…SIHVDPIPGL (75 aa)) is the PRC barrel domain.

This sequence belongs to the RimM family. In terms of assembly, binds ribosomal protein uS19.

Its subcellular location is the cytoplasm. In terms of biological role, an accessory protein needed during the final step in the assembly of 30S ribosomal subunit, possibly for assembly of the head region. Essential for efficient processing of 16S rRNA. May be needed both before and after RbfA during the maturation of 16S rRNA. It has affinity for free ribosomal 30S subunits but not for 70S ribosomes. The chain is Ribosome maturation factor RimM from Thermus thermophilus (strain ATCC 27634 / DSM 579 / HB8).